We begin with the raw amino-acid sequence, 233 residues long: UPF0502 protein YpsIP31758_2048 (233 aa).

The protein belongs to the UPF0502 family.

The protein is UPF0502 protein YpsIP31758_2048 of Yersinia pseudotuberculosis serotype O:1b (strain IP 31758).